Reading from the N-terminus, the 248-residue chain is Opiorphin prepropeptide (248 aa).

The N-terminal stretch at 1–21 is a signal peptide; it reads MKLTFFLGLLALISCFTPSES. Q22 carries the pyrrolidone carboxylic acid modification. Residues 150–198 form a disordered region; sequence DTTITTNPPTTATATTSTSTKPTMTISSSTVPISSTPEPATSISAATPA. Residue N218 is glycosylated (N-linked (GlcNAc...) asparagine).

Belongs to the PROL1/PROL3 family. As to expression, abundantly expressed in lacrimal gland where it found in the secretory endpieces. Also expressed at modest levels in the submandibular gland.

Its subcellular location is the secreted. Its function is as follows. Opiorphin is an endogenous inhibitor of neprilysin and aminopeptidase N. Inhibits the breakdown of substance P, Mca-BK2 and Met-enkephalin by neprilysin in vitro with IC(50) values of 29 uM, 33 uM and 33 uM respectively. Inhibits the breakdown of Ala-pNA by aminopeptidase N in vitro with an IC(50) of 65 uM. Has a potent analgesic effect when administered to rats by intravenous injection. In Homo sapiens (Human), this protein is Opiorphin prepropeptide.